The sequence spans 70 residues: MIVALLYLILAGAYLLVIPIAVLFYLKQRWYVASSIERLLMYFLVFFFFPGLLVLSPFANFRPQRRQVQV.

Transmembrane regions (helical) follow at residues 2-22 (IVAL…PIAV) and 39-59 (LLMY…SPFA).

This sequence belongs to the complex I NdhL subunit family. NDH-1 can be composed of about 15 different subunits; different subcomplexes with different compositions have been identified which probably have different functions.

It is found in the cellular thylakoid membrane. It carries out the reaction a plastoquinone + NADH + (n+1) H(+)(in) = a plastoquinol + NAD(+) + n H(+)(out). The enzyme catalyses a plastoquinone + NADPH + (n+1) H(+)(in) = a plastoquinol + NADP(+) + n H(+)(out). Its function is as follows. NDH-1 shuttles electrons from an unknown electron donor, via FMN and iron-sulfur (Fe-S) centers, to quinones in the respiratory and/or the photosynthetic chain. The immediate electron acceptor for the enzyme in this species is believed to be plastoquinone. Couples the redox reaction to proton translocation, and thus conserves the redox energy in a proton gradient. Cyanobacterial NDH-1 also plays a role in inorganic carbon-concentration. The chain is NAD(P)H-quinone oxidoreductase subunit L from Nostoc punctiforme (strain ATCC 29133 / PCC 73102).